Here is a 299-residue protein sequence, read N- to C-terminus: Taste receptor type 2 member 4 (299 aa).

Residues 1 to 9 (MLRLFYFSA) lie on the Extracellular side of the membrane. The chain crosses the membrane as a helical span at residues 10-30 (IIASVILNFVGIIMNLFITVV). At 31–46 (NCKTWVKSHRISSSDR) the chain is on the cytoplasmic side. A helical membrane pass occupies residues 47–67 (ILFSLGITRFLMLGLFLVNTI). Topologically, residues 68 to 81 (YFVSSNTERSVYLS) are extracellular. The chain crosses the membrane as a helical span at residues 82-102 (AFFVLCFMFLDSSSLWFVTLL). Topologically, residues 103–131 (NILYCVKITNFQHSVFLLLKRNISPKIPR) are cytoplasmic. The helical transmembrane segment at 132-152 (LLLACVLISAFTTCLYITLSQ) threads the bilayer. Over 153 to 172 (ASPFPELVTTRNNTSFNINE) the chain is Extracellular. N-linked (GlcNAc...) asparagine glycosylation is found at Asn-164 and Asn-165. Residues 173-193 (GILSLVVSLVLSSSLQFIINV) traverse the membrane as a helical segment. Over 194 to 230 (TSASLLIHSLRRHIQKMQKNATGFWNPQTEAHVGAMK) the chain is Cytoplasmic. A helical membrane pass occupies residues 231 to 251 (LMVYFLILYIPYSVATLVQYL). The Extracellular portion of the chain corresponds to 252 to 262 (PFYAGMDMGTK). Residues 263 to 283 (SICLIFATLYSPGHSVLIIIT) form a helical membrane-spanning segment. Residues 284–299 (HPKLKTTAKKILCFKK) are Cytoplasmic-facing.

It belongs to the G-protein coupled receptor T2R family.

It localises to the membrane. The protein localises to the cell projection. Its subcellular location is the cilium membrane. Gustducin-coupled receptor implicated in the perception of bitter compounds in the oral cavity and the gastrointestinal tract. Signals through PLCB2 and the calcium-regulated cation channel TRPM5. In airway epithelial cells, binding of denatonium increases the intracellular calcium ion concentration and stimulates ciliary beat frequency. This chain is Taste receptor type 2 member 4 (TAS2R4), found in Pan paniscus (Pygmy chimpanzee).